The chain runs to 67 residues: DNA-directed RNA polymerase subunit omega (67 aa).

Belongs to the RNA polymerase subunit omega family. In terms of assembly, the RNAP catalytic core consists of 2 alpha, 1 beta, 1 beta' and 1 omega subunit. When a sigma factor is associated with the core the holoenzyme is formed, which can initiate transcription.

The enzyme catalyses RNA(n) + a ribonucleoside 5'-triphosphate = RNA(n+1) + diphosphate. Functionally, promotes RNA polymerase assembly. Latches the N- and C-terminal regions of the beta' subunit thereby facilitating its interaction with the beta and alpha subunits. This chain is DNA-directed RNA polymerase subunit omega, found in Ralstonia nicotianae (strain ATCC BAA-1114 / GMI1000) (Ralstonia solanacearum).